Here is a 562-residue protein sequence, read N- to C-terminus: Dihydroxy-acid dehydratase (562 aa).

Asp80 contacts Mg(2+). Residue Cys121 participates in [2Fe-2S] cluster binding. Residues Asp122 and Lys123 each coordinate Mg(2+). Lys123 bears the N6-carboxylysine mark. Cys194 is a [2Fe-2S] cluster binding site. Glu446 is a Mg(2+) binding site. The active-site Proton acceptor is the Ser472.

This sequence belongs to the IlvD/Edd family. In terms of assembly, homodimer. The cofactor is [2Fe-2S] cluster. Mg(2+) is required as a cofactor.

The enzyme catalyses (2R)-2,3-dihydroxy-3-methylbutanoate = 3-methyl-2-oxobutanoate + H2O. The catalysed reaction is (2R,3R)-2,3-dihydroxy-3-methylpentanoate = (S)-3-methyl-2-oxopentanoate + H2O. It participates in amino-acid biosynthesis; L-isoleucine biosynthesis; L-isoleucine from 2-oxobutanoate: step 3/4. The protein operates within amino-acid biosynthesis; L-valine biosynthesis; L-valine from pyruvate: step 3/4. Functionally, functions in the biosynthesis of branched-chain amino acids. Catalyzes the dehydration of (2R,3R)-2,3-dihydroxy-3-methylpentanoate (2,3-dihydroxy-3-methylvalerate) into 2-oxo-3-methylpentanoate (2-oxo-3-methylvalerate) and of (2R)-2,3-dihydroxy-3-methylbutanoate (2,3-dihydroxyisovalerate) into 2-oxo-3-methylbutanoate (2-oxoisovalerate), the penultimate precursor to L-isoleucine and L-valine, respectively. The polypeptide is Dihydroxy-acid dehydratase (Staphylococcus aureus (strain Mu50 / ATCC 700699)).